Consider the following 516-residue polypeptide: Exodeoxyribonuclease 7 large subunit (516 aa).

The protein belongs to the XseA family. In terms of assembly, heterooligomer composed of large and small subunits.

The protein resides in the cytoplasm. It carries out the reaction Exonucleolytic cleavage in either 5'- to 3'- or 3'- to 5'-direction to yield nucleoside 5'-phosphates.. In terms of biological role, bidirectionally degrades single-stranded DNA into large acid-insoluble oligonucleotides, which are then degraded further into small acid-soluble oligonucleotides. This Chlamydia trachomatis serovar A (strain ATCC VR-571B / DSM 19440 / HAR-13) protein is Exodeoxyribonuclease 7 large subunit.